The chain runs to 187 residues: Ribosome-recycling factor (187 aa).

Belongs to the RRF family.

It is found in the cytoplasm. Its function is as follows. Responsible for the release of ribosomes from messenger RNA at the termination of protein biosynthesis. May increase the efficiency of translation by recycling ribosomes from one round of translation to another. The polypeptide is Ribosome-recycling factor (Ruegeria sp. (strain TM1040) (Silicibacter sp.)).